A 180-amino-acid polypeptide reads, in one-letter code: Ribosome maturation factor RimM (180 aa).

One can recognise a PRC barrel domain in the interval 97 to 169; sequence PGELSWDFFV…IITVDLPEGL (73 aa).

The protein belongs to the RimM family. In terms of assembly, binds ribosomal protein uS19.

Its subcellular location is the cytoplasm. In terms of biological role, an accessory protein needed during the final step in the assembly of 30S ribosomal subunit, possibly for assembly of the head region. Essential for efficient processing of 16S rRNA. May be needed both before and after RbfA during the maturation of 16S rRNA. It has affinity for free ribosomal 30S subunits but not for 70S ribosomes. This chain is Ribosome maturation factor RimM, found in Bacteroides fragilis (strain YCH46).